Consider the following 59-residue polypeptide: MAKLEITLKRSLIGRPQPQRRTVQALGLGKTNSVVVKEDNPAIRGMITKVSHLVDVKEV.

The protein belongs to the universal ribosomal protein uL30 family. In terms of assembly, part of the 50S ribosomal subunit.

The sequence is that of Large ribosomal subunit protein uL30 from Listeria welshimeri serovar 6b (strain ATCC 35897 / DSM 20650 / CCUG 15529 / CIP 8149 / NCTC 11857 / SLCC 5334 / V8).